A 401-amino-acid chain; its full sequence is Rab-interacting lysosomal protein (401 aa).

The 91-residue stretch at 11–101 (PGWGSREAAG…REENERLRRE (91 aa)) folds into the RH1 domain. Residues 75–181 (DSLQVSAQPA…AQDRERERQQ (107 aa)) adopt a coiled-coil conformation. Disordered regions lie at residues 167–239 (TQLR…SEAG) and 304–388 (KMLG…SALH). Over residues 172 to 181 (AQDRERERQQ) the composition is skewed to basic and acidic residues. Positions 240–316 (QCRFSREEFE…GTPEEAESSE (77 aa)) constitute an RH2 domain. Positions 272–333 (FQRELLTDHR…LLSDDKGDHP (62 aa)) are necessary for interaction with RAB7A and RAB34, lysosomal distribution and morphology. Position 308 is a phosphothreonine (Thr-308). Residues 310 to 319 (EEAESSEDEA) are compositionally biased toward acidic residues. Phosphoserine occurs at positions 314 and 315.

In terms of assembly, homodimer. Interacts with RAB7A. Interacts with RAB34. Identified in a complex with MREG and DCTN1; interacts directly with MREG. Interacts with CLN3. Interacts with FLCN; the interaction is direct and promotes association between RILP and RAB34. Ubiquitous. Strongly expressed in fetal heart, heart, stomach, spleen, adrenal gland, thyroid gland, salivary gland, fetal liver, liver and lung. Poorly expressed in brain.

The protein localises to the late endosome membrane. Its subcellular location is the lysosome membrane. It is found in the cytoplasmic vesicle. The protein resides in the phagosome membrane. Rab effector playing a role in late endocytic transport to degradative compartments. Involved in the regulation of lysosomal morphology and distribution. Induces recruitment of dynein-dynactin motor complexes to Rab7A-containing late endosome and lysosome compartments. Promotes centripetal migration of phagosomes and the fusion of phagosomes with the late endosomes and lysosomes. This is Rab-interacting lysosomal protein (RILP) from Homo sapiens (Human).